Consider the following 115-residue polypeptide: Urease subunit beta (115 aa).

This sequence belongs to the urease beta subunit family. As to quaternary structure, heterotrimer of UreA (gamma), UreB (beta) and UreC (alpha) subunits. Three heterotrimers associate to form the active enzyme.

The protein resides in the cytoplasm. It carries out the reaction urea + 2 H2O + H(+) = hydrogencarbonate + 2 NH4(+). The protein operates within nitrogen metabolism; urea degradation; CO(2) and NH(3) from urea (urease route): step 1/1. The polypeptide is Urease subunit beta (Arthrobacter sp. (strain FB24)).